The chain runs to 953 residues: Coatomer subunit beta (953 aa).

7 HEAT repeats span residues 17–54 (DSEP…NGEK), 96–131 (QEMI…KEAE), 132–168 (LLEP…NFEH), 240–276 (SERA…SAPT), 277–314 (AIKA…HPSH), 316–353 (RVLQ…SRNV), and 396–433 (DMAA…RFDN).

In terms of assembly, oligomeric complex that consists of at least the alpha, beta, beta', gamma, delta, epsilon and zeta subunits.

It is found in the cytoplasm. The protein resides in the golgi apparatus membrane. It localises to the cytoplasmic vesicle. The protein localises to the COPI-coated vesicle membrane. The coatomer is a cytosolic protein complex that binds to dilysine motifs and reversibly associates with Golgi non-clathrin-coated vesicles, which further mediate biosynthetic protein transport from the ER, via the Golgi up to the trans Golgi network. Coatomer complex is required for budding from Golgi membranes, and is essential for the retrograde Golgi-to-ER transport of dilysine-tagged proteins. In Gallus gallus (Chicken), this protein is Coatomer subunit beta (COPB1).